The primary structure comprises 158 residues: Small ribosomal subunit protein uS7 (158 aa).

The protein belongs to the universal ribosomal protein uS7 family. Part of the 30S ribosomal subunit. Contacts proteins S9 and S11.

One of the primary rRNA binding proteins, it binds directly to 16S rRNA where it nucleates assembly of the head domain of the 30S subunit. Is located at the subunit interface close to the decoding center, probably blocks exit of the E-site tRNA. This Flavobacterium psychrophilum (strain ATCC 49511 / DSM 21280 / CIP 103535 / JIP02/86) protein is Small ribosomal subunit protein uS7.